The sequence spans 488 residues: Zinc metalloproteinase-disintegrin 8 (488 aa).

The N-terminal stretch at 1–20 (MIQVLLVTICLAVFPYQGSS) is a signal peptide. Residues 21-191 (IILESGNVND…KASQLNLPPE (171 aa)) constitute a propeptide that is removed on maturation. The Peptidase M12B domain maps to 198–396 (TYIELVVVAD…STTRCLHNEP (199 aa)). Residues E201 and D285 each contribute to the Ca(2+) site. N296 carries an N-linked (GlcNAc...) asparagine glycan. Cystine bridges form between C309-C391, C349-C373, and C351-C356. Residue H334 coordinates Zn(2+). The active site involves E335. 2 residues coordinate Zn(2+): H338 and H344. 6 residues coordinate Ca(2+): C391, N394, N409, E413, E416, and D419. Residues 404–488 (PPFCGNYFKE…ADCPRNGLYG (85 aa)) enclose the Disintegrin domain. 7 disulfide bridges follow: C407–C426, C418–C436, C420–C431, C430–C453, C444–C450, C449–C474, and C462–C481. The Cell attachment site motif lies at 466–468 (RGD).

It belongs to the venom metalloproteinase (M12B) family. P-II subfamily. Requires Zn(2+) as cofactor. As to expression, expressed by the venom gland.

The protein localises to the secreted. Its function is as follows. Inhibits ADP-induced platelet aggregation (probably by binding integrin alpha-IIb/beta-3 (ITGA2B/ITGB3)) and degrades fibrinogen. The sequence is that of Zinc metalloproteinase-disintegrin 8 from Crotalus adamanteus (Eastern diamondback rattlesnake).